Consider the following 696-residue polypeptide: Elongation factor G (696 aa).

In terms of domain architecture, tr-type G spans 8-290; the sequence is ERYRNIGIMA…AVLDYLPSPL (283 aa). GTP contacts are provided by residues 17–24, 88–92, and 142–145; these read AHIDAGKT, DTPGH, and NKMD.

Belongs to the TRAFAC class translation factor GTPase superfamily. Classic translation factor GTPase family. EF-G/EF-2 subfamily.

The protein localises to the cytoplasm. Its function is as follows. Catalyzes the GTP-dependent ribosomal translocation step during translation elongation. During this step, the ribosome changes from the pre-translocational (PRE) to the post-translocational (POST) state as the newly formed A-site-bound peptidyl-tRNA and P-site-bound deacylated tRNA move to the P and E sites, respectively. Catalyzes the coordinated movement of the two tRNA molecules, the mRNA and conformational changes in the ribosome. This Nitrosomonas europaea (strain ATCC 19718 / CIP 103999 / KCTC 2705 / NBRC 14298) protein is Elongation factor G.